A 203-amino-acid polypeptide reads, in one-letter code: Small ribosomal subunit protein uS4 (203 aa).

An S4 RNA-binding domain is found at 93-153 (QRLDSLVYRL…DKSKNIVPIQ (61 aa)).

This sequence belongs to the universal ribosomal protein uS4 family. In terms of assembly, part of the 30S ribosomal subunit. Contacts protein S5. The interaction surface between S4 and S5 is involved in control of translational fidelity.

In terms of biological role, one of the primary rRNA binding proteins, it binds directly to 16S rRNA where it nucleates assembly of the body of the 30S subunit. With S5 and S12 plays an important role in translational accuracy. The polypeptide is Small ribosomal subunit protein uS4 (Leuconostoc citreum (strain KM20)).